The sequence spans 173 residues: MVDIALRSAVVAFMVVSLSAMFTSTQHSEVHIIGFSIPVSLRWNRSQPFEFLVVVELLICAYAFVQFVYQSVVLAKNAVPTRRCIWVQLAADQVCAYLVLAAAAAAAGASRTNKSGFQSLGMQNIKVPGVCIVLDKFCNRATIAIIFTLLAAGASGISVTLDVYMLTLTYYMG.

Methionine 1 is a topological domain (cytoplasmic). Residues 2-22 (VDIALRSAVVAFMVVSLSAMF) traverse the membrane as a helical segment. Residues 23-48 (TSTQHSEVHIIGFSIPVSLRWNRSQP) are Extracellular-facing. Asparagine 44 is a glycosylation site (N-linked (GlcNAc...) asparagine). Residues 49 to 69 (FEFLVVVELLICAYAFVQFVY) traverse the membrane as a helical segment. Residues 70-84 (QSVVLAKNAVPTRRC) lie on the Cytoplasmic side of the membrane. The chain crosses the membrane as a helical span at residues 85–105 (IWVQLAADQVCAYLVLAAAAA). The Extracellular segment spans residues 106–140 (AAGASRTNKSGFQSLGMQNIKVPGVCIVLDKFCNR). An N-linked (GlcNAc...) asparagine glycan is attached at asparagine 113. The helical transmembrane segment at 141 to 161 (ATIAIIFTLLAAGASGISVTL) threads the bilayer. At 162–173 (DVYMLTLTYYMG) the chain is on the cytoplasmic side.

This sequence belongs to the Casparian strip membrane proteins (CASP) family. Homodimer and heterodimers.

It localises to the cell membrane. This Pteridium aquilinum subsp. aquilinum (Bracken fern) protein is CASP-like protein 3A1.